We begin with the raw amino-acid sequence, 418 residues long: Xanthosine permease (418 aa).

Residues M1–V9 lie on the Cytoplasmic side of the membrane. A helical membrane pass occupies residues M10 to I30. Residues N31–G41 are Periplasmic-facing. The chain crosses the membrane as a helical span at residues M42–A62. Topologically, residues D63–R70 are cytoplasmic. Helical transmembrane passes span A71–D91 and P92–L112. The Cytoplasmic portion of the chain corresponds to S113–R136. The helical transmembrane segment at V137 to L157 threads the bilayer. Residues S158–S159 lie on the Periplasmic side of the membrane. Residues L160–P180 traverse the membrane as a helical segment. The Cytoplasmic segment spans residues K181 to R209. The helical transmembrane segment at M210–F230 threads the bilayer. The Periplasmic segment spans residues G231–S254. Residues I255–L275 traverse the membrane as a helical segment. The Cytoplasmic segment spans residues K276–R277. Residues F278 to F298 form a helical membrane-spanning segment. Topologically, residues A299 to T306 are periplasmic. A helical membrane pass occupies residues G307 to I327. Residues S328–L348 are Cytoplasmic-facing. The chain crosses the membrane as a helical span at residues F349–V369. At D370–Q381 the chain is on the periplasmic side. The helical transmembrane segment at T382 to F402 threads the bilayer. At K403–H418 the chain is on the cytoplasmic side.

It belongs to the major facilitator superfamily. Nucleoside:H(+) symporter (NHS) (TC 2.A.1.10) family.

The protein localises to the cell inner membrane. The enzyme catalyses xanthosine(in) + H(+)(in) = xanthosine(out) + H(+)(out). With respect to regulation, transport is abolished by the proton uncoupler 2,4-dinitrophenol. Its function is as follows. Uptake of xanthosine. Can also transport other nucleosides such as inosine, adenosine, cytidine, uridine and thymidine. Transport is driven by a proton motive force. In Escherichia coli (strain K12), this protein is Xanthosine permease.